Here is a 141-residue protein sequence, read N- to C-terminus: Putative pre-16S rRNA nuclease (141 aa).

It belongs to the YqgF nuclease family.

The protein resides in the cytoplasm. Could be a nuclease involved in processing of the 5'-end of pre-16S rRNA. This Coxiella burnetii (strain CbuK_Q154) (Coxiella burnetii (strain Q154)) protein is Putative pre-16S rRNA nuclease.